A 333-amino-acid chain; its full sequence is G-protein coupled receptor 146 (333 aa).

The Extracellular segment spans residues 1–22 (MWSCGPLNSTAWAEEPLCRNLR). N-linked (GlcNAc...) asparagine glycosylation is present at N8. A helical membrane pass occupies residues 23 to 43 (LGLWVLSLLYLGAGVPVSLGY). Residues 44 to 64 (NALLVLANLASKNTMTMPDVY) lie on the Cytoplasmic side of the membrane. A helical membrane pass occupies residues 65 to 85 (FVNMAVAGLVLTALAPAYLLG). Over 86–101 (PAHSRWALWSLSSEAH) the chain is Extracellular. A helical membrane pass occupies residues 102–122 (VTLLILFNVASLVTMYSTALL). Residues 123–145 (SLDYYIERALPRTYMASVYNTRH) lie on the Cytoplasmic side of the membrane. A helical transmembrane segment spans residues 146-166 (VCGFVWGGAVLTSFSSLLFYI). Residues 167–188 (CSHVSSRIAECARMQNTEAADA) are Extracellular-facing. Residues 189-209 (ILVLIGYVVPGLAVLYALALI) form a helical membrane-spanning segment. The Cytoplasmic portion of the chain corresponds to 210–232 (SRIGKEDTPLDQDTSRLDPSVHR). The helical transmembrane segment at 233–253 (LLVATVCTQFGLWTPYYLSLG) threads the bilayer. The Extracellular portion of the chain corresponds to 254 to 277 (HTVLTSRGRTVEGHYLGILQVAKD). The helical transmembrane segment at 278 to 298 (LAKFLAFSSSSVTPLLYRYIN) threads the bilayer. The Cytoplasmic segment spans residues 299–333 (KAFPGKLRRLMKKMHCGRRHCSPDPSGIQQVMAQA).

It belongs to the G-protein coupled receptor 1 family.

It is found in the cell membrane. Its function is as follows. GPCR receptor required for the regulation of plasma cholesterol levels. Receptor for CHLSN, a gut derived hormone which mediates an inhibitory effect of intestinal cholesterol absorption on hepatic cholesterol synthesis. Cholesin-binding exerts an antagonistic effect by inhibiting PKA signaling and suppressing SREBF2-controlled cholesterol in the liver. This Mus musculus (Mouse) protein is G-protein coupled receptor 146 (Gpr146).